We begin with the raw amino-acid sequence, 527 residues long: Coproporphyrinogen III oxidase (527 aa).

Residues 1–14 (MSTTDRVTTPTPTV) are compositionally biased toward low complexity. The disordered stretch occupies residues 1-23 (MSTTDRVTTPTPTVSGTDAPGPD). FAD-binding positions include 33–38 (GGGITG), 56–57 (ES), Lys-64, and 78–81 (GPDS). Residues 231–267 (RRAARQRAAQNNAQQNSSHQNSTGQNNSAGTRGPAAS) are disordered. Residues 236-252 (QRAAQNNAQQNSSHQNS) are compositionally biased toward low complexity. Residues Val-300, Trp-448, and 487 to 489 (VGL) contribute to the FAD site.

This sequence belongs to the protoporphyrinogen/coproporphyrinogen oxidase family. Coproporphyrinogen III oxidase subfamily. It depends on FAD as a cofactor.

Its subcellular location is the cytoplasm. The catalysed reaction is coproporphyrinogen III + 3 O2 = coproporphyrin III + 3 H2O2. It participates in porphyrin-containing compound metabolism; protoheme biosynthesis. Its function is as follows. Involved in coproporphyrin-dependent heme b biosynthesis. Catalyzes the oxidation of coproporphyrinogen III to coproporphyrin III. The sequence is that of Coproporphyrinogen III oxidase from Propionibacterium freudenreichii subsp. freudenreichii.